Reading from the N-terminus, the 141-residue chain is MGISVHCDIVSAEQEIFSGLVEMVIAAGSEGDLGITPGHTPLLTALNPGPVRIIKQGGEEEVFFVTGGFLEVQPNMVTILSDSAQRAGDMDEAAALEAKKEAEKALANRGGDFEYSRAASQLAEAAARLRTIQQMRNKLKR.

This sequence belongs to the ATPase epsilon chain family. As to quaternary structure, F-type ATPases have 2 components, CF(1) - the catalytic core - and CF(0) - the membrane proton channel. CF(1) has five subunits: alpha(3), beta(3), gamma(1), delta(1), epsilon(1). CF(0) has three main subunits: a, b and c.

It localises to the cell inner membrane. Functionally, produces ATP from ADP in the presence of a proton gradient across the membrane. The chain is ATP synthase epsilon chain from Hahella chejuensis (strain KCTC 2396).